We begin with the raw amino-acid sequence, 435 residues long: MAKFRVVHYLNQFFGQIGGEEKADTAPLKKDGPVGPGTALNGAFKGEAEVVGTVICGDSYFAENMEEALKQILSMIKEYNPDLVVAGPAFNAGRYGTACGAVAEAVVKNLGIPAVTGMYPENPGVEMYKKSVYIIATADSAIGMRNAIPKMAALGLKLLKKEEIGTPEQEGYIARGIRKNYFAEERGAKRAVDMLIAKIKGENFTTELPMPAFDRVPPNPAIKDLSKATIALVTSGGIVPKGNPDRIESSSASKFGKYSIAGVKDLTSDTFETAHGGYDPVYANQDADRVLPVDVLREMEAEGKIGKLHDYYYATVGNGTSVANAAKFGQAIAADLKASGVDAVILTSTUGTCTRCGAAMVKEIERAGIPVVHMCTIVPISKTVGANRIVPTVAIPHPLGNPALPADEEKALRRKLVEKALKALTTEVEGQTVFD.

U350 is a catalytic residue. Residue U350 is a non-standard amino acid, selenocysteine.

It belongs to the GrdB/GrdF/GrdH family. As to quaternary structure, heterohexamer of two alpha, two beta and two gamma subunits. Component of the glycine reductase complex, together with components A and C. PB is substrate specific.

It carries out the reaction acetyl phosphate + [thioredoxin]-disulfide + NH4(+) + H2O = [thioredoxin]-dithiol + glycine + phosphate + H(+). Its function is as follows. In the first step of glycine reductase, the substrate is bound to component PB via a Schiff base intermediate. Then the PB-activated substrate is nucleophilically attacked by the selenol anion of component PA to transform it to a carboxymethylated selenoether and the respective amine. By action of component PC, acetyl phosphate is formed, leaving component PA in its oxidized state. Finally component PA becomes reduced by the thioredoxin system to start a new catalytic cycle of reductive deamination. In Carboxydothermus hydrogenoformans (strain ATCC BAA-161 / DSM 6008 / Z-2901), this protein is Glycine reductase complex component B subunit gamma (grdB).